Consider the following 92-residue polypeptide: Small ribosomal subunit protein uS19 (92 aa).

The protein belongs to the universal ribosomal protein uS19 family.

Functionally, protein S19 forms a complex with S13 that binds strongly to the 16S ribosomal RNA. This is Small ribosomal subunit protein uS19 from Mesorhizobium japonicum (strain LMG 29417 / CECT 9101 / MAFF 303099) (Mesorhizobium loti (strain MAFF 303099)).